The following is a 162-amino-acid chain: NADH-quinone oxidoreductase subunit I 1 (162 aa).

4Fe-4S ferredoxin-type domains are found at residues 52 to 82 (LRRY…IEAG) and 93 to 122 (VRYD…EGPN). [4Fe-4S] cluster-binding residues include C62, C65, C68, C72, C102, C105, C108, and C112.

Belongs to the complex I 23 kDa subunit family. As to quaternary structure, NDH-1 is composed of 14 different subunits. Subunits NuoA, H, J, K, L, M, N constitute the membrane sector of the complex. It depends on [4Fe-4S] cluster as a cofactor.

It localises to the cell inner membrane. It catalyses the reaction a quinone + NADH + 5 H(+)(in) = a quinol + NAD(+) + 4 H(+)(out). Its function is as follows. NDH-1 shuttles electrons from NADH, via FMN and iron-sulfur (Fe-S) centers, to quinones in the respiratory chain. The immediate electron acceptor for the enzyme in this species is believed to be ubiquinone. Couples the redox reaction to proton translocation (for every two electrons transferred, four hydrogen ions are translocated across the cytoplasmic membrane), and thus conserves the redox energy in a proton gradient. The protein is NADH-quinone oxidoreductase subunit I 1 of Rhodopseudomonas palustris (strain ATCC BAA-98 / CGA009).